The chain runs to 155 residues: Aspartate carbamoyltransferase regulatory chain (155 aa).

Positions 112, 117, 140, and 143 each coordinate Zn(2+).

Belongs to the PyrI family. In terms of assembly, contains catalytic and regulatory chains. Requires Zn(2+) as cofactor.

In terms of biological role, involved in allosteric regulation of aspartate carbamoyltransferase. The polypeptide is Aspartate carbamoyltransferase regulatory chain (Phocaeicola vulgatus (strain ATCC 8482 / DSM 1447 / JCM 5826 / CCUG 4940 / NBRC 14291 / NCTC 11154) (Bacteroides vulgatus)).